Consider the following 381-residue polypeptide: Glycerol-3-phosphate dehydrogenase [NAD(+)] (381 aa).

The disordered stretch occupies residues 1-27 (MTAMDRLDHVSNQLAAKRQKKNPEGKP). Residues 34 to 39 (GSGNWG), F66, and F122 contribute to the NAD(+) site. K145 is a substrate binding site. A178 is a binding site for NAD(+). The Proton acceptor role is filled by K238. The NAD(+) site is built by R303 and Q332. 303 to 304 (RN) is a substrate binding site.

The protein belongs to the NAD-dependent glycerol-3-phosphate dehydrogenase family.

The enzyme catalyses sn-glycerol 3-phosphate + NAD(+) = dihydroxyacetone phosphate + NADH + H(+). In Pichia angusta (Yeast), this protein is Glycerol-3-phosphate dehydrogenase [NAD(+)] (GPD).